The following is a 273-amino-acid chain: DnaJ homolog subfamily C member 27-A (273 aa).

Residues 23–30 (GNAEVGKS), 71–75 (DMAGH), and 134–137 (NKID) each bind GTP. The region spanning 217-273 (DSWDMLGVKPGATRDEVNKAYRKLAVLLHPDKCMAPGSEDAFKAVVNARTALLKNIK) is the J domain.

The protein belongs to the small GTPase superfamily. Rab family.

Its subcellular location is the nucleus. Its function is as follows. GTPase possibly involved in regulation of the MEK/ERK pathway. This is DnaJ homolog subfamily C member 27-A (dnajc27-a) from Xenopus laevis (African clawed frog).